The chain runs to 629 residues: EF-hand calcium-binding domain-containing protein 7 (629 aa).

The segment at 1-25 (MAISPRSDATFSSQKSTPSESPRTK) is disordered. A compositionally biased stretch (polar residues) spans 7–21 (SDATFSSQKSTPSES). 2 EF-hand domains span residues 102–137 (TSKA…RGEK) and 138–173 (MTRE…TNEQ). The segment at 195–229 (NHIEGSPERDPSPVPKPSPKITRKTDPETFLNKGD) is disordered. Residues Ser-200 and Ser-212 each carry the phosphoserine modification. Positions 403–438 (EFKSTLSDIFEVIDLDGNGLLSLEEYNFFELRTSGE) constitute an EF-hand 3 domain. Residues Asp-416, Asp-418, Asn-420, and Glu-427 each contribute to the Ca(2+) site.

Component of the EvC complex composed of EFCAB7, IQCE, EVC2 and EVC; built from two subcomplexes, EVC2:EVC and EFCAB7:IQCE. Interacts (via EF-hand 1 and 2) with IQCE (via N-terminus); this interaction anchors the EVC-EVC2 complex in a signaling microdomain at the base of cilia and stimulates the Hedgehog (Hh) pathway. Interacts with EVC2 (via N-terminal end). Interacts with EVC.

Its subcellular location is the cell projection. It is found in the cilium membrane. In terms of biological role, component of the EvC complex that positively regulates ciliary Hedgehog (Hh) signaling. Required for the localization of the EVC2:EVC subcomplex at the base of primary cilia. This Homo sapiens (Human) protein is EF-hand calcium-binding domain-containing protein 7 (EFCAB7).